The following is a 349-amino-acid chain: Very-long-chain 3-oxoacyl-CoA reductase (349 aa).

Residues 19–39 (AIIFALLLGVFKLTVFSLKFA) traverse the membrane as a helical segment. Residues Val65, Asp119, Asn146, Tyr221, Lys225, Val254, and Ser256 each contribute to the NADP(+) site. Tyr221 (proton donor) is an active-site residue. Lys225 (lowers pKa of active site Tyr) is an active-site residue.

It belongs to the short-chain dehydrogenases/reductases (SDR) family.

It localises to the endoplasmic reticulum membrane. It carries out the reaction a very-long-chain (3R)-3-hydroxyacyl-CoA + NADP(+) = a very-long-chain 3-oxoacyl-CoA + NADPH + H(+). It functions in the pathway lipid metabolism; fatty acid biosynthesis. Component of the microsomal membrane bound fatty acid elongation system, which produces the 26-carbon very long-chain fatty acids (VLCFA) from palmitate. Catalyzes the reduction of the 3-ketoacyl-CoA intermediate that is formed in each cycle of fatty acid elongation. VLCFAs serve as precursors for ceramide and sphingolipids. The polypeptide is Very-long-chain 3-oxoacyl-CoA reductase (Candida albicans (strain SC5314 / ATCC MYA-2876) (Yeast)).